A 319-amino-acid polypeptide reads, in one-letter code: Aliphatic sulfonates import ATP-binding protein SsuB (319 aa).

The region spanning 63 to 282 is the ABC transporter domain; the sequence is VTLSGVSKRF…ARASAAFAAL (220 aa). 95-102 contacts ATP; the sequence is GRSGCGKS.

Belongs to the ABC transporter superfamily. Aliphatic sulfonates importer (TC 3.A.1.17.2) family. In terms of assembly, the complex is composed of two ATP-binding proteins (SsuB), two transmembrane proteins (SsuC) and a solute-binding protein (SsuA).

The protein resides in the cell inner membrane. It catalyses the reaction ATP + H2O + aliphatic sulfonate-[sulfonate-binding protein]Side 1 = ADP + phosphate + aliphatic sulfonateSide 2 + [sulfonate-binding protein]Side 1.. Its function is as follows. Part of the ABC transporter complex SsuABC involved in aliphatic sulfonates import. Responsible for energy coupling to the transport system. The polypeptide is Aliphatic sulfonates import ATP-binding protein SsuB (Burkholderia ambifaria (strain ATCC BAA-244 / DSM 16087 / CCUG 44356 / LMG 19182 / AMMD) (Burkholderia cepacia (strain AMMD))).